The primary structure comprises 195 residues: Segregation and condensation protein B (195 aa).

It belongs to the ScpB family. Homodimer. Homodimerization may be required to stabilize the binding of ScpA to the Smc head domains. Component of a cohesin-like complex composed of ScpA, ScpB and the Smc homodimer, in which ScpA and ScpB bind to the head domain of Smc. The presence of the three proteins is required for the association of the complex with DNA.

It localises to the cytoplasm. In terms of biological role, participates in chromosomal partition during cell division. May act via the formation of a condensin-like complex containing Smc and ScpA that pull DNA away from mid-cell into both cell halves. The polypeptide is Segregation and condensation protein B (Clostridium perfringens (strain ATCC 13124 / DSM 756 / JCM 1290 / NCIMB 6125 / NCTC 8237 / Type A)).